A 495-amino-acid chain; its full sequence is Dipeptide and tripeptide permease A (495 aa).

Residues Met-1 to Ser-20 are Cytoplasmic-facing. The chain crosses the membrane as a helical span at residues Ile-21 to Val-41. The Periplasmic portion of the chain corresponds to Lys-42–Ser-51. Residues Phe-52–Leu-72 traverse the membrane as a helical segment. The Cytoplasmic segment spans residues Gly-73 to Arg-81. 2 helical membrane passes run Thr-82–Glu-102 and His-103–Ala-123. The Periplasmic segment spans residues Asn-124 to Thr-145. Residues Met-146 to Ala-166 traverse the membrane as a helical segment. The Cytoplasmic portion of the chain corresponds to Asp-167–Tyr-171. A helical transmembrane segment spans residues Ala-172–Met-192. Over Gln-193–Arg-209 the chain is Periplasmic. The chain crosses the membrane as a helical span at residues Leu-210–Leu-230. The Cytoplasmic segment spans residues Leu-231 to Lys-232. The helical transmembrane segment at His-233 to Val-253 threads the bilayer. Residues Lys-254–Lys-266 lie on the Periplasmic side of the membrane. A helical membrane pass occupies residues Met-267–Met-287. The Cytoplasmic portion of the chain corresponds to Pro-288 to Gln-312. Residues Phe-313–Asn-333 traverse the membrane as a helical segment. Over Lys-334–Lys-344 the chain is Periplasmic. Residues Phe-345–Tyr-365 traverse the membrane as a helical segment. Topologically, residues Ala-366 to Asn-375 are cytoplasmic. The helical transmembrane segment at Trp-376–Leu-396 threads the bilayer. Residues Ala-397–Gly-409 lie on the Periplasmic side of the membrane. The chain crosses the membrane as a helical span at residues Phe-410 to Ala-430. At Gly-431–Arg-451 the chain is on the cytoplasmic side. Residues Val-452–Pro-472 traverse the membrane as a helical segment. Topologically, residues Trp-473–Arg-495 are periplasmic.

Belongs to the major facilitator superfamily. Proton-dependent oligopeptide transporter (POT/PTR) (TC 2.A.17) family. DtpA subfamily.

It localises to the cell inner membrane. Functionally, proton-dependent permease that transports di- and tripeptides. The chain is Dipeptide and tripeptide permease A from Chromobacterium violaceum (strain ATCC 12472 / DSM 30191 / JCM 1249 / CCUG 213 / NBRC 12614 / NCIMB 9131 / NCTC 9757 / MK).